Reading from the N-terminus, the 633-residue chain is Threonine--tRNA ligase (633 aa).

The region spanning 1-61 (MINISFPDGS…DNDCRLRILT (61 aa)) is the TGS domain. Positions 242–533 (DHRKLGKELD…LIEEYAGRFP (292 aa)) are catalytic. Zn(2+) contacts are provided by C333, H384, and H510.

Belongs to the class-II aminoacyl-tRNA synthetase family. Homodimer. It depends on Zn(2+) as a cofactor.

It is found in the cytoplasm. It carries out the reaction tRNA(Thr) + L-threonine + ATP = L-threonyl-tRNA(Thr) + AMP + diphosphate + H(+). Its function is as follows. Catalyzes the attachment of threonine to tRNA(Thr) in a two-step reaction: L-threonine is first activated by ATP to form Thr-AMP and then transferred to the acceptor end of tRNA(Thr). Also edits incorrectly charged L-seryl-tRNA(Thr). The sequence is that of Threonine--tRNA ligase from Rickettsia bellii (strain OSU 85-389).